The chain runs to 109 residues: DNA-binding protein Mpal_0536 (109 aa).

Residues 14 to 35 (MAQLQSQQMDQQQMDEEKQRAK) are disordered. Residues 16 to 25 (QLQSQQMDQQ) show a composition bias toward low complexity.

Belongs to the PDCD5 family.

This Methanosphaerula palustris (strain ATCC BAA-1556 / DSM 19958 / E1-9c) protein is DNA-binding protein Mpal_0536.